The following is an 86-amino-acid chain: Small ribosomal subunit protein uS17 (86 aa).

Belongs to the universal ribosomal protein uS17 family. As to quaternary structure, part of the 30S ribosomal subunit.

Functionally, one of the primary rRNA binding proteins, it binds specifically to the 5'-end of 16S ribosomal RNA. The protein is Small ribosomal subunit protein uS17 of Bifidobacterium longum (strain DJO10A).